The primary structure comprises 340 residues: tRNA N6-adenosine threonylcarbamoyltransferase (340 aa).

2 residues coordinate Fe cation: His115 and His119. Substrate is bound by residues 138–142 (VVSGG), Asp171, Gly184, Asp188, and Asn278. Asp306 provides a ligand contact to Fe cation.

This sequence belongs to the KAE1 / TsaD family. Fe(2+) is required as a cofactor.

The protein localises to the cytoplasm. The catalysed reaction is L-threonylcarbamoyladenylate + adenosine(37) in tRNA = N(6)-L-threonylcarbamoyladenosine(37) in tRNA + AMP + H(+). Functionally, required for the formation of a threonylcarbamoyl group on adenosine at position 37 (t(6)A37) in tRNAs that read codons beginning with adenine. Is involved in the transfer of the threonylcarbamoyl moiety of threonylcarbamoyl-AMP (TC-AMP) to the N6 group of A37, together with TsaE and TsaB. TsaD likely plays a direct catalytic role in this reaction. The chain is tRNA N6-adenosine threonylcarbamoyltransferase from Clostridium botulinum (strain Hall / ATCC 3502 / NCTC 13319 / Type A).